We begin with the raw amino-acid sequence, 157 residues long: Phosphopantetheine adenylyltransferase (157 aa).

Thr10 contributes to the substrate binding site. Residues Thr10–Phe11 and His18 contribute to the ATP site. 3 residues coordinate substrate: Lys42, Leu74, and Arg88. ATP contacts are provided by residues Gly89–Arg91, Glu99, and Asn124–Ser130.

It belongs to the bacterial CoaD family. In terms of assembly, homohexamer. The cofactor is Mg(2+).

The protein resides in the cytoplasm. It carries out the reaction (R)-4'-phosphopantetheine + ATP + H(+) = 3'-dephospho-CoA + diphosphate. Its pathway is cofactor biosynthesis; coenzyme A biosynthesis; CoA from (R)-pantothenate: step 4/5. With respect to regulation, tightly binds to CoA, which is presumably a feedback inhibitor. Potently inhibited by D-amethopterin, which simultaneously occupies the 4'-phosphopantetheine- and ATP-binding sites; following treatment with D-amethopterin, H.pylori exhibits morphological characteristics associated with cell death, showing that D-amethopterin displays antimicrobial activity. Reversibly transfers an adenylyl group from ATP to 4'-phosphopantetheine, yielding dephospho-CoA (dPCoA) and pyrophosphate. This Helicobacter pylori (strain ATCC 700392 / 26695) (Campylobacter pylori) protein is Phosphopantetheine adenylyltransferase.